The chain runs to 593 residues: MRALLTFFVAGLLVLSSPAMALFGNNQNSSFASGSNDFVPVDQAFPFNYFQQDHRITLDWQVKEGYYLYQQRLSFSAENVVLGDIQMENGQPYRDEFFGDVNIYTNPLFVNIPMQDWQPGAKLIVQYQGCAKAGFCYPPETRVIDITSFTNGDMAPATMPTQTANPLDTSTPQPLTQQDQLASGLADNWWTPLLFLALGVGLAFTPCVLPMYPILTSIVLGSGKLSQRRALGLSLVYVQGMALTYTLLGLVVASAGLQFQAAMQHPYVLIGLSILFVTLALSMFGVYTLQLPSSVQTWLNNLSNKQQGGSSAGVFAMGAISGLVCSPCTTAPLSGALLYVAQSGDLLTGGVALYALAMGMGIPLILVAVFGNKLLPKAGGWMDRVKTLFGFVLLAAPIFLLERILPEMWSTALWSALGIAAFGWLYHVKNSLEFGGWKQSAVGIIAVLGLFASAQPALNYWFTDSSQQTQTSEVSFIKIRNVEELQQQLALAKQAKKPVMLDFYADWCVACKEFEKYTFHDPAVAAQLKQFVLLQADVTRNQAQDIELLQAQQVLGLPTIDFWDAQGNPVSNARLTGFMQAAPFLEHIQRISN.

A signal peptide spans methionine 1 to alanine 21. Cystine bridges form between cysteine 130-cysteine 136 and cysteine 207-cysteine 328. Transmembrane regions (helical) follow at residues leucine 193–leucine 215, leucine 235–leucine 257, leucine 269–leucine 291, glycine 318–valine 340, leucine 347–valine 369, arginine 384–leucine 401, methionine 408–leucine 425, and serine 440–phenylalanine 462. A Thioredoxin domain is found at phenylalanine 451–asparagine 593. Residues cysteine 508 and cysteine 511 are joined by a disulfide bond.

Belongs to the thioredoxin family. DsbD subfamily.

It is found in the cell inner membrane. It catalyses the reaction [protein]-dithiol + NAD(+) = [protein]-disulfide + NADH + H(+). It carries out the reaction [protein]-dithiol + NADP(+) = [protein]-disulfide + NADPH + H(+). Required to facilitate the formation of correct disulfide bonds in some periplasmic proteins and for the assembly of the periplasmic c-type cytochromes. Acts by transferring electrons from cytoplasmic thioredoxin to the periplasm. This transfer involves a cascade of disulfide bond formation and reduction steps. The sequence is that of Thiol:disulfide interchange protein DsbD from Vibrio vulnificus (strain CMCP6).